A 565-amino-acid polypeptide reads, in one-letter code: MKSPAPSRPQKMALIPACIFLCFAALSVQAEETPVTPQPPDILLGPLFNDVQNAKLFPDQKTFADAVPNSDPLMILADYRMQQNQSGFDLRHFVNVNFTLPKEGEKYVPPEGQSLREHIDGLWPVLTRSTENTEKWDSLLPLPEPYVVPGGRFREVYYWDSYFTMLGLAESGHWDKVADMVANFAHEIDTYGHIPNGNRSYYLSRSQPPFFAMMVELLAQHEGDAALKQYLPQMQKEYAYWMDGVENLQAGQQEKRVVKLQDGTLLNRYWDDRDTPRPESWVEDIATAKSNPNRPATEIYRDLRSAAASGWDFSSRWMDNPQQLNTLRTTSIVPVDLNSLMFKMEKILARASKAAGDNAMANQYETLANARQKGIEKYLWNDQQGWYADYDLKSHKVRNQLTAAALFPLYVNAAAKDRANKMATATKTHLLQPGGLNTTSVKSGQQWDAPNGWAPLQWVATEGLQNYGQKEVAMDISWHFLTNVQHTYDREKKLVEKYDVSTTGTGGGGGEYPLQDGFGWTNGVTLKMLDLICPKEQPCDNVPATRPTVKSATTQPSTKEAQPTP.

The first 30 residues, 1 to 30 (MKSPAPSRPQKMALIPACIFLCFAALSVQA), serve as a signal peptide directing secretion. Residues Arg152, 159 to 160 (WD), Asn196, 205 to 207 (RSQ), 277 to 279 (RPE), and Gly310 each bind substrate. Residues Asp312 and Glu496 each act as proton donor/acceptor in the active site. Glu511 provides a ligand contact to substrate. Positions 538–565 (PCDNVPATRPTVKSATTQPSTKEAQPTP) are disordered. Polar residues predominate over residues 548–565 (TVKSATTQPSTKEAQPTP).

The protein belongs to the glycosyl hydrolase 37 family. In terms of assembly, monomer.

It is found in the periplasm. The catalysed reaction is alpha,alpha-trehalose + H2O = alpha-D-glucose + beta-D-glucose. Provides the cells with the ability to utilize trehalose at high osmolarity by splitting it into glucose molecules that can subsequently be taken up by the phosphotransferase-mediated uptake system. This is Periplasmic trehalase from Escherichia coli O139:H28 (strain E24377A / ETEC).